Consider the following 185-residue polypeptide: Large ribosomal subunit protein bL25 (185 aa).

This sequence belongs to the bacterial ribosomal protein bL25 family. CTC subfamily. Part of the 50S ribosomal subunit; part of the 5S rRNA/L5/L18/L25 subcomplex. Contacts the 5S rRNA. Binds to the 5S rRNA independently of L5 and L18.

Functionally, this is one of the proteins that binds to the 5S RNA in the ribosome where it forms part of the central protuberance. This is Large ribosomal subunit protein bL25 from Laribacter hongkongensis (strain HLHK9).